A 143-amino-acid polypeptide reads, in one-letter code: Small ribosomal subunit protein bS18m (143 aa).

It belongs to the bacterial ribosomal protein bS18 family. Component of the mitochondrial ribosome small subunit (28S) which comprises a 12S rRNA and about 30 distinct proteins.

It localises to the mitochondrion. This is Small ribosomal subunit protein bS18m (MRPS18C) from Bos taurus (Bovine).